The sequence spans 162 residues: Phosphopantetheine adenylyltransferase (162 aa).

Threonine 10 contributes to the substrate binding site. ATP-binding positions include threonine 10 to phenylalanine 11 and histidine 18. Residues lysine 42, leucine 74, and arginine 88 each coordinate substrate. Residues glycine 89 to arginine 91, glutamate 99, and phenylalanine 124 to threonine 130 contribute to the ATP site.

The protein belongs to the bacterial CoaD family. As to quaternary structure, homohexamer. Mg(2+) is required as a cofactor.

The protein localises to the cytoplasm. The enzyme catalyses (R)-4'-phosphopantetheine + ATP + H(+) = 3'-dephospho-CoA + diphosphate. It functions in the pathway cofactor biosynthesis; coenzyme A biosynthesis; CoA from (R)-pantothenate: step 4/5. Reversibly transfers an adenylyl group from ATP to 4'-phosphopantetheine, yielding dephospho-CoA (dPCoA) and pyrophosphate. The sequence is that of Phosphopantetheine adenylyltransferase from Francisella tularensis subsp. mediasiatica (strain FSC147).